Here is a 567-residue protein sequence, read N- to C-terminus: Hexose transporter HXT9 (567 aa).

The span at 1-16 shows a compositional bias: polar residues; sequence MSGVNNTSANDLSTTE. A disordered region spans residues 1–45; that stretch reads MSGVNNTSANDLSTTESNSNSVANAPSVKTEHNDSKNSLNLDATE. At 1-56 the chain is on the cytoplasmic side; it reads MSGVNNTSANDLSTTESNSNSVANAPSVKTEHNDSKNSLNLDATEPPIDLPQKPLS. Over residues 17 to 28 the composition is skewed to low complexity; sequence SNSNSVANAPSV. The helical transmembrane segment at 57–77 threads the bilayer; sequence AYTTVAILCLMIAFGGFIFGW. The Extracellular segment spans residues 78–112; the sequence is DTGTISGFVNLSDFIRRFGQKNDKGTYYLSKVRMG. Asn-87 is a glycosylation site (N-linked (GlcNAc...) asparagine). Residues 113-133 traverse the membrane as a helical segment; it reads LIVSIFNIGCAIGGIVLSKVG. The Cytoplasmic portion of the chain corresponds to 134 to 139; the sequence is DIYGRR. A helical membrane pass occupies residues 140–160; that stretch reads IGLITVTAIYVVGILIQITSI. Residues 161–170 lie on the Extracellular side of the membrane; that stretch reads NKWYQYFIGR. A helical transmembrane segment spans residues 171 to 191; it reads IISGLGVGGIAVLSPMLISEV. The Cytoplasmic portion of the chain corresponds to 192 to 197; sequence APKQIR. Residues 198-218 traverse the membrane as a helical segment; it reads GTLVQLYQLMCTMGIFLGYCT. At 219–232 the chain is on the extracellular side; the sequence is NYGTKNYHNATQWR. Asn-227 carries N-linked (GlcNAc...) asparagine glycosylation. Residues 233–253 form a helical membrane-spanning segment; sequence VGLGLCFAWTTFMVSGMMFVP. Residues 254-336 are Cytoplasmic-facing; sequence ESPRYLIEVG…IQSLQQLTGD (83 aa). Residues 337 to 353 traverse the membrane as a helical segment; it reads NYFFYYGTTIFKSVGLK. Residues 354–359 lie on the Extracellular side of the membrane; it reads DSFQTS. Residues 360–377 traverse the membrane as a helical segment; that stretch reads IIIGVVNFFSSFIAVYTI. Topologically, residues 378–384 are cytoplasmic; the sequence is ERFGRRT. Residues 385–405 traverse the membrane as a helical segment; it reads CLLWGAASMLCCFAVFASVGV. Residues 406–429 are Extracellular-facing; sequence TKLWPQGSSHQDITSQGAGNCMIV. A helical membrane pass occupies residues 430–450; it reads FTMFFIFSFATTWAGGCYVIV. Residues 451-467 are Cytoplasmic-facing; that stretch reads SETFPLRVKSRGMAIAT. A helical transmembrane segment spans residues 468 to 488; that stretch reads AANWMWGFLISFFTPFITGAI. A topological domain (extracellular) is located at residue Asn-489. Residues 490–510 form a helical membrane-spanning segment; it reads FYYGYVFLGCLVFAYFYVFFF. At 511–567 the chain is on the cytoplasmic side; that stretch reads VPETKGLTLEEVNTMWLEGVPAWKSASWVPPERRTADYDADAIDHDDRPIYKRFFSS.

It belongs to the major facilitator superfamily. Sugar transporter (TC 2.A.1.1) family.

It is found in the membrane. In terms of biological role, probable glucose transporter. The sequence is that of Hexose transporter HXT9 (HXT9) from Saccharomyces cerevisiae (strain ATCC 204508 / S288c) (Baker's yeast).